Reading from the N-terminus, the 71-residue chain is Large ribosomal subunit protein bL31 (71 aa).

Zn(2+)-binding residues include Cys16, Cys18, Cys37, and Cys40.

The protein belongs to the bacterial ribosomal protein bL31 family. Type A subfamily. In terms of assembly, part of the 50S ribosomal subunit. Zn(2+) serves as cofactor.

Its function is as follows. Binds the 23S rRNA. This Pseudomonas putida (strain GB-1) protein is Large ribosomal subunit protein bL31.